A 57-amino-acid chain; its full sequence is DNA gyrase inhibitor YacG (57 aa).

Residues C10, C13, C25, and C29 each contribute to the Zn(2+) site.

The protein belongs to the DNA gyrase inhibitor YacG family. Interacts with GyrB. Zn(2+) serves as cofactor.

Inhibits all the catalytic activities of DNA gyrase by preventing its interaction with DNA. Acts by binding directly to the C-terminal domain of GyrB, which probably disrupts DNA binding by the gyrase. The protein is DNA gyrase inhibitor YacG of Brucella melitensis biotype 1 (strain ATCC 23456 / CCUG 17765 / NCTC 10094 / 16M).